The primary structure comprises 957 residues: Vacuolar membrane protease (957 aa).

Residues 1–10 (MARYNPFSFT) are Cytoplasmic-facing. The chain crosses the membrane as a helical span at residues 11 to 31 (PGPVVFFTTVIYVGLFAALLV). The Vacuolar portion of the chain corresponds to 32–369 (THLTVPDYPS…RVFVVFQLHT (338 aa)). N-linked (GlcNAc...) asparagine glycosylation is found at Asn48, Asn105, and Asn136. Zn(2+) contacts are provided by His152 and Asp164. Glu198 (proton acceptor) is an active-site residue. Positions 199, 224, and 297 each coordinate Zn(2+). Residues 370–390 (LFALCVTLLVVAPITLIGLTF) form a helical membrane-spanning segment. At 391 to 423 (GLSKADKNYLLARKAFVYSSDDDNPVQLYGWRG) the chain is on the cytoplasmic side. A helical transmembrane segment spans residues 424-444 (FFRFPIIFISATAVVVALAYL). Topologically, residues 445-450 (LVRFNA) are vacuolar. A helical transmembrane segment spans residues 451–471 (FIIYSSPFAVWSMMLSAWFFV). Topologically, residues 472-490 (AWFFSRGADAMRPSALQRM) are cytoplasmic. A helical transmembrane segment spans residues 491 to 511 (YALIWLFIGSFVLLTIVTVFV). Topologically, residues 512 to 521 (NNYQVVAGYP) are vacuolar. The helical transmembrane segment at 522 to 542 (ALFYFAVVFVAIMLSYLELFF) threads the bilayer. The Cytoplasmic segment spans residues 543–642 (APTKSAYARH…YPGEQEWSGK (100 aa)). Disordered regions lie at residues 559–586 (SRRN…PVAD) and 603–627 (FTRY…SQRL). Over residues 603 to 613 (FTRYGSRRDSA) the composition is skewed to basic and acidic residues. The helical transmembrane segment at 643 to 663 (LPSWIWIIQLLLLAPLVIVLV) threads the bilayer. Over 664–685 (GQVALLLTSALYQTPSDGNSPL) the chain is Vacuolar. A helical transmembrane segment spans residues 686–706 (FIYLAIAALSVLLLAPTGPFI). Residues 707 to 713 (HRFTYHV) are Cytoplasmic-facing. Residues 714 to 734 (PTFLFLVCLGTVIYNLVAFPF) form a helical membrane-spanning segment. The Vacuolar portion of the chain corresponds to 735–957 (SRDHRLKVYF…LVEGFKRFEI (223 aa)). Residues Asn782, Asn818, and Asn834 are each glycosylated (N-linked (GlcNAc...) asparagine).

It belongs to the peptidase M28 family. It depends on Zn(2+) as a cofactor.

Its subcellular location is the vacuole membrane. Functionally, may be involved in vacuolar sorting and osmoregulation. In Pyrenophora teres f. teres (strain 0-1) (Barley net blotch fungus), this protein is Vacuolar membrane protease.